The chain runs to 620 residues: UvrABC system protein C (620 aa).

The GIY-YIG domain occupies 13-92 (DKPGVYIMKN…IKKYSPRYNI (80 aa)). A UVR domain is found at 204–239 (TSIIKKLKLEMEKAAEELEFEKAAKIRDRILAIELI).

The protein belongs to the UvrC family. In terms of assembly, interacts with UvrB in an incision complex.

The protein resides in the cytoplasm. In terms of biological role, the UvrABC repair system catalyzes the recognition and processing of DNA lesions. UvrC both incises the 5' and 3' sides of the lesion. The N-terminal half is responsible for the 3' incision and the C-terminal half is responsible for the 5' incision. The protein is UvrABC system protein C of Clostridium perfringens (strain 13 / Type A).